The primary structure comprises 103 residues: UPF0122 protein FN1394 (103 aa).

It belongs to the UPF0122 family.

Its function is as follows. Might take part in the signal recognition particle (SRP) pathway. This is inferred from the conservation of its genetic proximity to ftsY/ffh. May be a regulatory protein. This is UPF0122 protein FN1394 from Fusobacterium nucleatum subsp. nucleatum (strain ATCC 25586 / DSM 15643 / BCRC 10681 / CIP 101130 / JCM 8532 / KCTC 2640 / LMG 13131 / VPI 4355).